The sequence spans 463 residues: Bifunctional protein HldE (463 aa).

The tract at residues Met-1–Asp-313 is ribokinase. Residue Asp-258 is part of the active site. Residues Ala-331–Arg-463 are cytidylyltransferase.

It in the N-terminal section; belongs to the carbohydrate kinase PfkB family. In the C-terminal section; belongs to the cytidylyltransferase family. Homodimer.

The enzyme catalyses D-glycero-beta-D-manno-heptose 7-phosphate + ATP = D-glycero-beta-D-manno-heptose 1,7-bisphosphate + ADP + H(+). It carries out the reaction D-glycero-beta-D-manno-heptose 1-phosphate + ATP + H(+) = ADP-D-glycero-beta-D-manno-heptose + diphosphate. It participates in nucleotide-sugar biosynthesis; ADP-L-glycero-beta-D-manno-heptose biosynthesis; ADP-L-glycero-beta-D-manno-heptose from D-glycero-beta-D-manno-heptose 7-phosphate: step 1/4. The protein operates within nucleotide-sugar biosynthesis; ADP-L-glycero-beta-D-manno-heptose biosynthesis; ADP-L-glycero-beta-D-manno-heptose from D-glycero-beta-D-manno-heptose 7-phosphate: step 3/4. In terms of biological role, catalyzes the phosphorylation of D-glycero-D-manno-heptose 7-phosphate at the C-1 position to selectively form D-glycero-beta-D-manno-heptose-1,7-bisphosphate. Functionally, catalyzes the ADP transfer from ATP to D-glycero-beta-D-manno-heptose 1-phosphate, yielding ADP-D-glycero-beta-D-manno-heptose. The polypeptide is Bifunctional protein HldE (Streptomyces coelicolor (strain ATCC BAA-471 / A3(2) / M145)).